Consider the following 250-residue polypeptide: DNA polymerase sliding clamp (250 aa).

Belongs to the PCNA family. Homotrimer. The subunits circularize to form a toroid; DNA passes through its center. Replication factor C (RFC) is required to load the toroid on the DNA.

Functionally, sliding clamp subunit that acts as a moving platform for DNA processing. Responsible for tethering the catalytic subunit of DNA polymerase and other proteins to DNA during high-speed replication. The sequence is that of DNA polymerase sliding clamp from Methanococcus maripaludis (strain C6 / ATCC BAA-1332).